We begin with the raw amino-acid sequence, 394 residues long: LL-diaminopimelate aminotransferase (394 aa).

Residues Tyr14 and Gly41 each contribute to the substrate site. Pyridoxal 5'-phosphate contacts are provided by residues Tyr71, 104–105, Tyr128, Asn174, Tyr205, and 233–235; these read AK and SFS. Residues Lys105, Tyr128, and Asn174 each contribute to the substrate site. Lys236 carries the N6-(pyridoxal phosphate)lysine modification. Positions 244 and 275 each coordinate pyridoxal 5'-phosphate. Asn275 and Arg369 together coordinate substrate.

This sequence belongs to the class-I pyridoxal-phosphate-dependent aminotransferase family. LL-diaminopimelate aminotransferase subfamily. In terms of assembly, homodimer. Pyridoxal 5'-phosphate serves as cofactor.

It catalyses the reaction (2S,6S)-2,6-diaminopimelate + 2-oxoglutarate = (S)-2,3,4,5-tetrahydrodipicolinate + L-glutamate + H2O + H(+). It functions in the pathway amino-acid biosynthesis; L-lysine biosynthesis via DAP pathway; LL-2,6-diaminopimelate from (S)-tetrahydrodipicolinate (aminotransferase route): step 1/1. Functionally, involved in the synthesis of meso-diaminopimelate (m-DAP or DL-DAP), required for both lysine and peptidoglycan biosynthesis. Catalyzes the direct conversion of tetrahydrodipicolinate to LL-diaminopimelate. Is also able to use meso-diaminopimelate, cystathionine, lysine or ornithine as substrates. This chain is LL-diaminopimelate aminotransferase, found in Chlamydia trachomatis serovar D (strain ATCC VR-885 / DSM 19411 / UW-3/Cx).